A 769-amino-acid polypeptide reads, in one-letter code: Portal protein (769 aa).

The interval 458–479 (LEGYVNNLFKTIEGLKDVNSDL) is putative leucine zipper motif. Disordered stretches follow at residues 654 to 675 (RGPR…DDER) and 750 to 769 (RQLT…DRRS). Over residues 760-769 (VGCERRDRRS) the composition is skewed to basic and acidic residues.

The protein belongs to the herpesviridae portal protein family. Homododecamerizes. Interacts with terminase subunits TRM1 and TRM3.

It is found in the virion. It localises to the host nucleus. In terms of biological role, forms a portal in the viral capsid through which viral DNA is translocated during DNA packaging. Assembles as a dodecamer at a single fivefold axe of the T=16 icosahedric capsid. Binds to the molecular motor that translocates the viral DNA, termed terminase. The polypeptide is Portal protein (54) (Homo sapiens (Human)).